The primary structure comprises 232 residues: Zinc-finger homeodomain protein 5 (232 aa).

Residues 1–11 (MELSEHEEDAG) show a composition bias toward acidic residues. Residues 1-25 (MELSEHEEDAGDVGGGCSSPPTPPH) form a disordered region. A ZF-HD dimerization-type; degenerate zinc finger spans residues 40-86 (YHECLRNHAAASGGHVVDGCGEFMPASTEEPLACAACGCHRSFHRRD). The tract at residues 126 to 170 (GLPFPGYGTPSGGTGTTTASSSDERLRPSPVQPRRRSRTTFTREQ) is disordered. The homeobox DNA-binding region spans 159–222 (RRRSRTTFTR…NNKHSFKQKQ (64 aa)).

Homo- and heterodimer with other ZFHD proteins.

The protein resides in the nucleus. Its function is as follows. Putative transcription factor. The protein is Zinc-finger homeodomain protein 5 (ZHD5) of Oryza sativa subsp. indica (Rice).